The chain runs to 334 residues: Glycerol-3-phosphate dehydrogenase [NAD(P)+] (334 aa).

Residues serine 13, phenylalanine 14, and lysine 108 each coordinate NADPH. 3 residues coordinate sn-glycerol 3-phosphate: lysine 108, glycine 137, and threonine 139. Alanine 141 lines the NADPH pocket. Sn-glycerol 3-phosphate contacts are provided by lysine 193, aspartate 246, serine 256, arginine 257, and asparagine 258. Residue lysine 193 is the Proton acceptor of the active site. Arginine 257 contacts NADPH. 2 residues coordinate NADPH: valine 281 and glutamate 283.

The protein belongs to the NAD-dependent glycerol-3-phosphate dehydrogenase family.

The protein resides in the cytoplasm. The enzyme catalyses sn-glycerol 3-phosphate + NAD(+) = dihydroxyacetone phosphate + NADH + H(+). The catalysed reaction is sn-glycerol 3-phosphate + NADP(+) = dihydroxyacetone phosphate + NADPH + H(+). Its pathway is membrane lipid metabolism; glycerophospholipid metabolism. Functionally, catalyzes the reduction of the glycolytic intermediate dihydroxyacetone phosphate (DHAP) to sn-glycerol 3-phosphate (G3P), the key precursor for phospholipid synthesis. The polypeptide is Glycerol-3-phosphate dehydrogenase [NAD(P)+] (Bartonella tribocorum (strain CIP 105476 / IBS 506)).